Here is a 480-residue protein sequence, read N- to C-terminus: UDP-N-acetylmuramate--L-alanine ligase (480 aa).

Glycine 122 to threonine 128 is a binding site for ATP.

Belongs to the MurCDEF family.

It is found in the cytoplasm. It catalyses the reaction UDP-N-acetyl-alpha-D-muramate + L-alanine + ATP = UDP-N-acetyl-alpha-D-muramoyl-L-alanine + ADP + phosphate + H(+). It participates in cell wall biogenesis; peptidoglycan biosynthesis. In terms of biological role, cell wall formation. This Pseudomonas paraeruginosa (strain DSM 24068 / PA7) (Pseudomonas aeruginosa (strain PA7)) protein is UDP-N-acetylmuramate--L-alanine ligase.